The primary structure comprises 504 residues: MASWTSSQFLYEETKPWGIQFLEKFKRSGRLSFKQYQALVFILTFVAYIAFHAARKPNSIVKGTLSASTIEGGWAPFDGPDGTALLGQIDLAFLSVYAVGMFVAGHLGDRLDLRTFLTIGMIGTGLFTALFGVAFWANFHSFYYFLAVQVMAGLFQSIGWPCIVAVLGNWFDKKRRGMIMGVWSAHTSLGNIAGSLIASGLLRYGWGWSFLGPAFLMTFLGIVVYLFLPVNPPTVEAERDGTEIDSTMRLGDTITESLLESRMSTGFDRKAVGFMAAWKIPGVAPFAFCLFFTKLVSYTFLYWLPFYVSHNMIGGEYLSEETSGNLSTIFDVGGVVGGVLAGYISDQLNGRAITAAGFMYLAIPALFLYRVFGHISLTINVILMFTSGVFIIGPFALITTAVSADLGTHKSLKGNARALATVSAIIDGTGSVGAAIGPVLTGYISAISWDAVFYMLMTAALISGLLLTKLIIAEVKALLFGSEDEVAASSSSPPASRPPIDVLV.

The next 12 helical transmembrane spans lie at leucine 31–phenylalanine 51, alanine 84–alanine 104, phenylalanine 116–tryptophan 136, phenylalanine 145–alanine 165, methionine 178–alanine 198, phenylalanine 210–valine 230, isoleucine 280–tyrosine 302, glycine 324–isoleucine 344, alanine 352–phenylalanine 372, threonine 378–isoleucine 398, alanine 424–isoleucine 444, and valine 452–isoleucine 472.

It belongs to the major facilitator superfamily. Organophosphate:Pi antiporter (OPA) (TC 2.A.1.4) family. As to expression, expressed in the root-hair differentiation zone.

It localises to the membrane. This is Putative glycerol-3-phosphate transporter 2 from Arabidopsis thaliana (Mouse-ear cress).